The following is a 599-amino-acid chain: Beta-(1--&gt;2)glucan export ATP-binding/permease protein NdvA (599 aa).

Residues 21 to 311 form the ABC transmembrane type-1 domain; the sequence is GWILAVANLL…VVNFINNVLM (291 aa). The next 6 membrane-spanning stretches (helical) occupy residues 22 to 42, 68 to 88, 146 to 166, 168 to 188, 254 to 274, and 276 to 296; these read WILA…PILF, LLGA…LVAL, EHFA…YINW, LAIL…LVVH, VITR…GIYL, and QQGL…TLLI. Residues 345-579 enclose the ABC transporter domain; it reads VEFQNVSFSY…GGAFAQLARA (235 aa). ATP is bound at residue 378–385; it reads GATGAGKS.

This sequence belongs to the ABC transporter superfamily. Beta-(1--&gt;2)glucan exporter (TC 3.A.1.108.1) family. As to quaternary structure, homodimer.

It is found in the cell inner membrane. The enzyme catalyses [(1-&gt;2)-beta-D-glucosyl](n)(in) + ATP + H2O = [(1-&gt;2)-beta-D-glucosyl](n)(out) + ADP + phosphate + H(+). Involved in beta-(1--&gt;2)glucan export. Transmembrane domains (TMD) form a pore in the inner membrane and the ATP-binding domain (NBD) is responsible for energy generation. In Rhodopseudomonas palustris (strain ATCC BAA-98 / CGA009), this protein is Beta-(1--&gt;2)glucan export ATP-binding/permease protein NdvA.